The primary structure comprises 194 residues: Cilia- and flagella-associated protein 107 (194 aa).

Mn stretches follow at residues 45 to 60 (TPQS…FPDH) and 95 to 107 (ISTY…RHGY).

In terms of assembly, microtubule inner protein component of sperm flagellar doublet microtubules. As to expression, expressed in airway epithelial cells.

It localises to the cytoplasm. The protein localises to the cytoskeleton. The protein resides in the cilium axoneme. Its subcellular location is the flagellum axoneme. Functionally, microtubule inner protein (MIP) part of the dynein-decorated doublet microtubules (DMTs) in cilia axoneme, which is required for motile cilia beating. In Homo sapiens (Human), this protein is Cilia- and flagella-associated protein 107.